A 482-amino-acid chain; its full sequence is tRNA sulfurtransferase (482 aa).

The 105-residue stretch at 61-165 (AQYLETLACI…NDELYIISAV (105 aa)) folds into the THUMP domain. ATP-binding positions include 183–184 (LL), K265, G287, and Q296. Cysteines 344 and 456 form a disulfide. The Rhodanese domain maps to 404 to 482 (LAADEVILDI…GFDNVKVYRP (79 aa)). C456 serves as the catalytic Cysteine persulfide intermediate.

The protein belongs to the ThiI family.

The protein resides in the cytoplasm. It carries out the reaction [ThiI sulfur-carrier protein]-S-sulfanyl-L-cysteine + a uridine in tRNA + 2 reduced [2Fe-2S]-[ferredoxin] + ATP + H(+) = [ThiI sulfur-carrier protein]-L-cysteine + a 4-thiouridine in tRNA + 2 oxidized [2Fe-2S]-[ferredoxin] + AMP + diphosphate. The catalysed reaction is [ThiS sulfur-carrier protein]-C-terminal Gly-Gly-AMP + S-sulfanyl-L-cysteinyl-[cysteine desulfurase] + AH2 = [ThiS sulfur-carrier protein]-C-terminal-Gly-aminoethanethioate + L-cysteinyl-[cysteine desulfurase] + A + AMP + 2 H(+). Its pathway is cofactor biosynthesis; thiamine diphosphate biosynthesis. Catalyzes the ATP-dependent transfer of a sulfur to tRNA to produce 4-thiouridine in position 8 of tRNAs, which functions as a near-UV photosensor. Also catalyzes the transfer of sulfur to the sulfur carrier protein ThiS, forming ThiS-thiocarboxylate. This is a step in the synthesis of thiazole, in the thiamine biosynthesis pathway. The sulfur is donated as persulfide by IscS. This Aeromonas salmonicida (strain A449) protein is tRNA sulfurtransferase.